The following is a 158-amino-acid chain: Cyclic pyranopterin monophosphate synthase (158 aa).

Residues 75–77 (LCH) and 113–114 (ME) each bind substrate. Residue D128 is part of the active site.

The protein belongs to the MoaC family. As to quaternary structure, homohexamer; trimer of dimers.

The catalysed reaction is (8S)-3',8-cyclo-7,8-dihydroguanosine 5'-triphosphate = cyclic pyranopterin phosphate + diphosphate. It functions in the pathway cofactor biosynthesis; molybdopterin biosynthesis. Catalyzes the conversion of (8S)-3',8-cyclo-7,8-dihydroguanosine 5'-triphosphate to cyclic pyranopterin monophosphate (cPMP). This Dinoroseobacter shibae (strain DSM 16493 / NCIMB 14021 / DFL 12) protein is Cyclic pyranopterin monophosphate synthase.